We begin with the raw amino-acid sequence, 324 residues long: D-alanine--D-alanine ligase (324 aa).

An ATP-grasp domain is found at 121–321 (NQYLKAFGVR…IKDVMTDIIE (201 aa)). An ATP-binding site is contributed by 149-204 (VEKIGLPCFIKPNLGGSSFGVTKVKTREQIQPAIAKAFSEAEEVMIEAFMGGTELT). The Mg(2+) site is built by aspartate 275, glutamate 288, and asparagine 290.

Belongs to the D-alanine--D-alanine ligase family. Mg(2+) serves as cofactor. Mn(2+) is required as a cofactor.

It localises to the cytoplasm. It catalyses the reaction 2 D-alanine + ATP = D-alanyl-D-alanine + ADP + phosphate + H(+). The protein operates within cell wall biogenesis; peptidoglycan biosynthesis. In terms of biological role, cell wall formation. The polypeptide is D-alanine--D-alanine ligase (Bacteroides fragilis (strain ATCC 25285 / DSM 2151 / CCUG 4856 / JCM 11019 / LMG 10263 / NCTC 9343 / Onslow / VPI 2553 / EN-2)).